A 364-amino-acid polypeptide reads, in one-letter code: tRNA-specific 2-thiouridylase MnmA 2 (364 aa).

ATP-binding positions include 10 to 17 and Met36; that span reads GMSGGVDS. Cys106 (nucleophile) is an active-site residue. An intrachain disulfide couples Cys106 to Cys204. Residue Gly130 participates in ATP binding. The interval 154–156 is interaction with tRNA; it reads KDQ. Cys204 acts as the Cysteine persulfide intermediate in catalysis. The interval 310–311 is interaction with tRNA; that stretch reads RY.

It belongs to the MnmA/TRMU family.

It localises to the cytoplasm. The enzyme catalyses S-sulfanyl-L-cysteinyl-[protein] + uridine(34) in tRNA + AH2 + ATP = 2-thiouridine(34) in tRNA + L-cysteinyl-[protein] + A + AMP + diphosphate + H(+). Catalyzes the 2-thiolation of uridine at the wobble position (U34) of tRNA, leading to the formation of s(2)U34. The polypeptide is tRNA-specific 2-thiouridylase MnmA 2 (Thermoanaerobacter pseudethanolicus (strain ATCC 33223 / 39E) (Clostridium thermohydrosulfuricum)).